The primary structure comprises 493 residues: Membrane-bound lytic murein transglycosylase F (493 aa).

Positions 1 to 21 are cleaved as a signal peptide; that stretch reads MKRLRFNYLLIGLITVLLALA. The non-LT domain stretch occupies residues 22 to 268; it reads LWPSIPWYGG…RLDEKYLGHV (247 aa). Residues 269–493 are LT domain; it reads GTFDYVDTRT…LNPVSALPLP (225 aa). Glu-313 is an active-site residue.

In the N-terminal section; belongs to the bacterial solute-binding protein 3 family. It in the C-terminal section; belongs to the transglycosylase Slt family.

Its subcellular location is the cell outer membrane. The enzyme catalyses Exolytic cleavage of the (1-&gt;4)-beta-glycosidic linkage between N-acetylmuramic acid (MurNAc) and N-acetylglucosamine (GlcNAc) residues in peptidoglycan, from either the reducing or the non-reducing ends of the peptidoglycan chains, with concomitant formation of a 1,6-anhydrobond in the MurNAc residue.. Its function is as follows. Murein-degrading enzyme that degrades murein glycan strands and insoluble, high-molecular weight murein sacculi, with the concomitant formation of a 1,6-anhydromuramoyl product. Lytic transglycosylases (LTs) play an integral role in the metabolism of the peptidoglycan (PG) sacculus. Their lytic action creates space within the PG sacculus to allow for its expansion as well as for the insertion of various structures such as secretion systems and flagella. This Erwinia tasmaniensis (strain DSM 17950 / CFBP 7177 / CIP 109463 / NCPPB 4357 / Et1/99) protein is Membrane-bound lytic murein transglycosylase F.